The sequence spans 654 residues: Cytochrome B pre-mRNA-processing protein 1 (654 aa).

It is found in the mitochondrion. In terms of biological role, responsible for conferring a stable 5'-end on cytochrome b mRNA. The chain is Cytochrome B pre-mRNA-processing protein 1 (CBP1) from Saccharomyces cerevisiae (strain ATCC 204508 / S288c) (Baker's yeast).